A 226-amino-acid polypeptide reads, in one-letter code: V-type proton ATPase subunit E 1 (226 aa).

Residue Ala2 is modified to N-acetylalanine. Position 56 is a phosphotyrosine (Tyr56).

Belongs to the V-ATPase E subunit family. As to quaternary structure, V-ATPase is a heteromultimeric enzyme made up of two complexes: the ATP-hydrolytic V1 complex and the proton translocation V0 complex. The V1 complex consists of three catalytic AB heterodimers that form a heterohexamer, three peripheral stalks each consisting of EG heterodimers, one central rotor including subunits D and F, and the regulatory subunits C and H. The proton translocation complex V0 consists of the proton transport subunit a, a ring of proteolipid subunits c9c'', rotary subunit d, subunits e and f, and the accessory subunits ATP6AP1/Ac45 and ATP6AP2/PRR. Interacts with RABL2/RABL2A; binds preferentially to GTP-bound RABL2. Interacts with ALDOC. Interacts with RAB11B. As to expression, expressed within the midpiece of sperm tail (at protein level). Kidney; localizes to early distal nephron, encompassing thick ascending limbs and distal convoluted tubules (at protein level).

It is found in the apical cell membrane. The protein localises to the cytoplasmic vesicle. Its subcellular location is the secretory vesicle. The protein resides in the synaptic vesicle membrane. It localises to the clathrin-coated vesicle membrane. Subunit of the V1 complex of vacuolar(H+)-ATPase (V-ATPase), a multisubunit enzyme composed of a peripheral complex (V1) that hydrolyzes ATP and a membrane integral complex (V0) that translocates protons. V-ATPase is responsible for acidifying and maintaining the pH of intracellular compartments and in some cell types, is targeted to the plasma membrane, where it is responsible for acidifying the extracellular environment. The polypeptide is V-type proton ATPase subunit E 1 (Atp6v1e1) (Mus musculus (Mouse)).